The sequence spans 134 residues: 6,7-dimethyl-8-ribityllumazine synthase (134 aa).

5-amino-6-(D-ribitylamino)uracil contacts are provided by residues Phe11, 43 to 45 (AYD), and 67 to 69 (AIV). A (2S)-2-hydroxy-3-oxobutyl phosphate-binding site is contributed by 72–73 (DT). His75 acts as the Proton donor in catalysis. Phe100 is a binding site for 5-amino-6-(D-ribitylamino)uracil. (2S)-2-hydroxy-3-oxobutyl phosphate is bound at residue Arg115.

The protein belongs to the DMRL synthase family.

It carries out the reaction (2S)-2-hydroxy-3-oxobutyl phosphate + 5-amino-6-(D-ribitylamino)uracil = 6,7-dimethyl-8-(1-D-ribityl)lumazine + phosphate + 2 H2O + H(+). It functions in the pathway cofactor biosynthesis; riboflavin biosynthesis; riboflavin from 2-hydroxy-3-oxobutyl phosphate and 5-amino-6-(D-ribitylamino)uracil: step 1/2. Its function is as follows. Catalyzes the formation of 6,7-dimethyl-8-ribityllumazine by condensation of 5-amino-6-(D-ribitylamino)uracil with 3,4-dihydroxy-2-butanone 4-phosphate. This is the penultimate step in the biosynthesis of riboflavin. The chain is 6,7-dimethyl-8-ribityllumazine synthase from Halorubrum lacusprofundi (strain ATCC 49239 / DSM 5036 / JCM 8891 / ACAM 34).